The following is a 72-amino-acid chain: Translation initiation factor IF-1 (72 aa).

The 72-residue stretch at 1–72 folds into the S1-like domain; that stretch reads MAKDDVIEVE…TRGRITYRFK (72 aa).

It belongs to the IF-1 family. As to quaternary structure, component of the 30S ribosomal translation pre-initiation complex which assembles on the 30S ribosome in the order IF-2 and IF-3, IF-1 and N-formylmethionyl-tRNA(fMet); mRNA recruitment can occur at any time during PIC assembly.

It localises to the cytoplasm. In terms of biological role, one of the essential components for the initiation of protein synthesis. Stabilizes the binding of IF-2 and IF-3 on the 30S subunit to which N-formylmethionyl-tRNA(fMet) subsequently binds. Helps modulate mRNA selection, yielding the 30S pre-initiation complex (PIC). Upon addition of the 50S ribosomal subunit IF-1, IF-2 and IF-3 are released leaving the mature 70S translation initiation complex. The chain is Translation initiation factor IF-1 from Streptococcus gordonii (strain Challis / ATCC 35105 / BCRC 15272 / CH1 / DL1 / V288).